Consider the following 135-residue polypeptide: C-type lectin BpLec (135 aa).

4 cysteine pairs are disulfide-bonded: Cys3–Cys14, Cys31–Cys131, Cys38–Cys133, and Cys106–Cys123. One can recognise a C-type lectin domain in the interval Met10–Gln132. Residues Gln96, Asp98, Glu104, Asn119, and Asp120 each contribute to the Ca(2+) site. The short motif at Gln96–Asp98 is the Galactose-binding element.

This sequence belongs to the true venom lectin family. Homodimer; disulfide-linked. Expressed by the venom gland.

The protein localises to the secreted. This lectin displays hemagglutinating activity on dog (128'000 HU/mg) and cat erythrocytes, that is inhibited by beta-galactosides (D-galactose, D-lactose, and N-acetyl-D-galactosamine) and EDTA. In addition, has been shown to hemagglutinate promastigote forms of Leishmania amazonensis. Also inhibits Gram-positive (S.aureus ATCC 25923) (MIC is 31.25 ug/ml) but not Gram-negative (E.coli ATCC 25922) bacteria. Is a calcium-dependent lectin. The polypeptide is C-type lectin BpLec (Bothrops pauloensis (Neuwied's lancehead)).